Reading from the N-terminus, the 78-residue chain is Acyl carrier protein (78 aa).

In terms of domain architecture, Carrier spans 2–77 (STIEERVKKI…AAIDFIQANQ (76 aa)). S37 carries the post-translational modification O-(pantetheine 4'-phosphoryl)serine.

Belongs to the acyl carrier protein (ACP) family. 4'-phosphopantetheine is transferred from CoA to a specific serine of apo-ACP by AcpS. This modification is essential for activity because fatty acids are bound in thioester linkage to the sulfhydryl of the prosthetic group.

It localises to the cytoplasm. It functions in the pathway lipid metabolism; fatty acid biosynthesis. Its function is as follows. Carrier of the growing fatty acid chain in fatty acid biosynthesis. The sequence is that of Acyl carrier protein from Pectobacterium atrosepticum (strain SCRI 1043 / ATCC BAA-672) (Erwinia carotovora subsp. atroseptica).